A 162-amino-acid polypeptide reads, in one-letter code: UPF0305 protein MMP0665 (162 aa).

This sequence belongs to the UPF0305 family.

This Methanococcus maripaludis (strain DSM 14266 / JCM 13030 / NBRC 101832 / S2 / LL) protein is UPF0305 protein MMP0665.